The following is a 496-amino-acid chain: Probable G-protein coupled receptor K01A12.3 (496 aa).

Over 1–19 the chain is Extracellular; sequence MESVTRHRADMISFFTFDS. The helical transmembrane segment at 20-40 threads the bilayer; the sequence is YISIVGVAYTAVGLLGVFCNV. Over 41–58 the chain is Cytoplasmic; it reads TTVIMILTNRVFRLSAYT. The chain crosses the membrane as a helical span at residues 59-79; the sequence is IMANVALADSIVMLIAGVACG. Residues 80-128 lie on the Extracellular side of the membrane; sequence MDVMWPNPNDLTSFIPSLEEPYQKIAPVSLRNDSKTDSSAAGFETGNIH. N-linked (GlcNAc...) asparagine glycosylation occurs at Asn-111. The chain crosses the membrane as a helical span at residues 129–149; the sequence is AVLSFSFVAAWTAGVISYAML. The Cytoplasmic segment spans residues 150–169; the sequence is GTNRCIAICYYGTKARALNQ. Residues 170–190 traverse the membrane as a helical segment; it reads VSVAVACSASTWIVGIAAALV. Topologically, residues 191 to 216 are extracellular; the sequence is GTLSQPMIGIQRTMWSISFLEPRPHT. Residues 217–237 traverse the membrane as a helical segment; sequence TLFFTLLCAANLLGLGAQWVC. Topologically, residues 238–285 are cytoplasmic; the sequence is STLVLLKIRQVKKKISKNKLNQNSANRFRKQVILALNEIIVTGNFKAR. A helical transmembrane segment spans residues 286-306; sequence LTFQFFYPSILCTISTFLFFI. Residues 307 to 318 are Extracellular-facing; that stretch reads KPYAFEYLSGWQ. The helical transmembrane segment at 319 to 339 threads the bilayer; that stretch reads LVILHLLWLCNHTCNPFIYAY. At 340-496 the chain is on the cytoplasmic side; that stretch reads FNDRMRLTYK…WVKFAKKASI (157 aa). The segment at 451-470 is disordered; sequence TKELESAHNQGGSSRFDSER.

Belongs to the G-protein coupled receptor 1 family.

Its subcellular location is the cell membrane. The sequence is that of Probable G-protein coupled receptor K01A12.3 from Caenorhabditis elegans.